Reading from the N-terminus, the 621-residue chain is Frizzled and smoothened-like protein H (621 aa).

Positions 1–21 are cleaved as a signal peptide; that stretch reads MNLKFYNLIFFISFLICCIHG. At 22 to 246 the chain is on the extracellular side; the sequence is QRYLPVEGGK…VWNQIFKIND (225 aa). Residues 27 to 166 enclose the FZ domain; that stretch reads VEGGKCEKYI…IEWVKYNLTI (140 aa). Intrachain disulfides connect Cys-32–Cys-103 and Cys-46–Cys-96. Residues Asn-60, Asn-107, Asn-163, Asn-176, and Asn-206 are each glycosylated (N-linked (GlcNAc...) asparagine). The helical transmembrane segment at 247–267 threads the bilayer; that stretch reads VLSSISLACTLILLFTFGILN. At 268 to 277 the chain is on the cytoplasmic side; the sequence is PKLNRFDKKN. A helical membrane pass occupies residues 278-298; it reads LFFIAGVFGMSVSGVLIAANG. Over 299–318 the chain is Extracellular; sequence SEKTVCPTPERYAVNTDRVC. A helical membrane pass occupies residues 319 to 339; it reads VASGFLVHFSALFAILWWTIG. The Cytoplasmic portion of the chain corresponds to 340–359; the sequence is LADVYYGIKFVGKKIKIKVR. The chain crosses the membrane as a helical span at residues 360 to 380; sequence YYLLATLTISLAFTLVPLGTG. Residues 381–400 are Extracellular-facing; that stretch reads QYQAGLSNVMCFLKDEIYQS. Residues 401–421 traverse the membrane as a helical segment; it reads MTFFVPLGICLTMGTILMILV. Topologically, residues 422 to 464 are cytoplasmic; it reads MREIYVIVKSNSTSSSFSSSSSKSKSKSKSSDSISYLKLQVKP. A helical membrane pass occupies residues 465-485; it reads MLNIILFYFTFLYLFLFVRVI. Over 486–520 the chain is Extracellular; it reads NSRYQEYEDSAIPYMLCLAKGGGDSCRLKGPSAGS. Residues 521–541 traverse the membrane as a helical segment; it reads LGYFAYCLRIYGIYLFIISFL. Residues 542–621 lie on the Cytoplasmic side of the membrane; that stretch reads SSRTIKIWKE…RNYNTDDDDL (80 aa). Residues 575-594 are compositionally biased toward low complexity; it reads FSSSKNTSTTQNSTLNNTES. Residues 575–603 form a disordered region; the sequence is FSSSKNTSTTQNSTLNNTESDTSKRGNSS.

It belongs to the G-protein coupled receptor Fz/Smo family.

The protein localises to the membrane. This chain is Frizzled and smoothened-like protein H (fslH), found in Dictyostelium discoideum (Social amoeba).